A 495-amino-acid polypeptide reads, in one-letter code: ATP synthase subunit beta, chloroplastic (495 aa).

172–179 contributes to the ATP binding site; that stretch reads GGAGVGKT.

The protein belongs to the ATPase alpha/beta chains family. In terms of assembly, F-type ATPases have 2 components, CF(1) - the catalytic core - and CF(0) - the membrane proton channel. CF(1) has five subunits: alpha(3), beta(3), gamma(1), delta(1), epsilon(1). CF(0) has four main subunits: a(1), b(1), b'(1) and c(9-12).

It localises to the plastid. Its subcellular location is the chloroplast thylakoid membrane. The catalysed reaction is ATP + H2O + 4 H(+)(in) = ADP + phosphate + 5 H(+)(out). Produces ATP from ADP in the presence of a proton gradient across the membrane. The catalytic sites are hosted primarily by the beta subunits. This is ATP synthase subunit beta, chloroplastic from Pseudogaltonia clavata (Cape hyacinth).